Consider the following 490-residue polypeptide: Aspartyl/glutamyl-tRNA(Asn/Gln) amidotransferase subunit B (490 aa).

The protein belongs to the GatB/GatE family. GatB subfamily. As to quaternary structure, heterotrimer of A, B and C subunits.

The catalysed reaction is L-glutamyl-tRNA(Gln) + L-glutamine + ATP + H2O = L-glutaminyl-tRNA(Gln) + L-glutamate + ADP + phosphate + H(+). The enzyme catalyses L-aspartyl-tRNA(Asn) + L-glutamine + ATP + H2O = L-asparaginyl-tRNA(Asn) + L-glutamate + ADP + phosphate + 2 H(+). In terms of biological role, allows the formation of correctly charged Asn-tRNA(Asn) or Gln-tRNA(Gln) through the transamidation of misacylated Asp-tRNA(Asn) or Glu-tRNA(Gln) in organisms which lack either or both of asparaginyl-tRNA or glutaminyl-tRNA synthetases. The reaction takes place in the presence of glutamine and ATP through an activated phospho-Asp-tRNA(Asn) or phospho-Glu-tRNA(Gln). In Methylobacterium sp. (strain 4-46), this protein is Aspartyl/glutamyl-tRNA(Asn/Gln) amidotransferase subunit B.